Reading from the N-terminus, the 172-residue chain is 3-hydroxydecanoyl-[acyl-carrier-protein] dehydratase (172 aa).

His71 is a catalytic residue.

The protein belongs to the thioester dehydratase family. FabA subfamily. As to quaternary structure, homodimer.

Its subcellular location is the cytoplasm. The catalysed reaction is a (3R)-hydroxyacyl-[ACP] = a (2E)-enoyl-[ACP] + H2O. It catalyses the reaction (3R)-hydroxydecanoyl-[ACP] = (2E)-decenoyl-[ACP] + H2O. The enzyme catalyses (2E)-decenoyl-[ACP] = (3Z)-decenoyl-[ACP]. It functions in the pathway lipid metabolism; fatty acid biosynthesis. Its function is as follows. Necessary for the introduction of cis unsaturation into fatty acids. Catalyzes the dehydration of (3R)-3-hydroxydecanoyl-ACP to E-(2)-decenoyl-ACP and then its isomerization to Z-(3)-decenoyl-ACP. Can catalyze the dehydratase reaction for beta-hydroxyacyl-ACPs with saturated chain lengths up to 16:0, being most active on intermediate chain length. This Escherichia coli (strain 55989 / EAEC) protein is 3-hydroxydecanoyl-[acyl-carrier-protein] dehydratase.